The primary structure comprises 208 residues: Large ribosomal subunit protein uL3 (208 aa).

Residues 116–148 (GFQGVIKRHGQSRGPMAHGSRYHRRPGSMGPVA) are disordered.

It belongs to the universal ribosomal protein uL3 family. As to quaternary structure, part of the 50S ribosomal subunit. Forms a cluster with proteins L14 and L19.

Functionally, one of the primary rRNA binding proteins, it binds directly near the 3'-end of the 23S rRNA, where it nucleates assembly of the 50S subunit. The chain is Large ribosomal subunit protein uL3 from Streptococcus pyogenes serotype M5 (strain Manfredo).